Reading from the N-terminus, the 229-residue chain is Potassium/proton antiporter CemA (229 aa).

The next 4 membrane-spanning stretches (helical) occupy residues 7 to 27, 114 to 134, 154 to 174, and 189 to 209; these read FTPLPYLASIVFLPWWVSLSF, IICFAILSVYSILGNEELVIL, ILLVTDLWIGFHSPHGWELMI, and IISGLVSTFPVILDTIVKYWI.

This sequence belongs to the CemA family.

The protein localises to the plastid. Its subcellular location is the chloroplast inner membrane. It carries out the reaction K(+)(in) + H(+)(out) = K(+)(out) + H(+)(in). Functionally, contributes to K(+)/H(+) antiport activity by supporting proton efflux to control proton extrusion and homeostasis in chloroplasts in a light-dependent manner to modulate photosynthesis. Prevents excessive induction of non-photochemical quenching (NPQ) under continuous-light conditions. Indirectly promotes efficient inorganic carbon uptake into chloroplasts. The polypeptide is Potassium/proton antiporter CemA (Acorus calamus var. americanus (American sweet flag)).